The chain runs to 126 residues: Holo-[acyl-carrier-protein] synthase (126 aa).

The Mg(2+) site is built by aspartate 9 and glutamate 58.

The protein belongs to the P-Pant transferase superfamily. AcpS family. The cofactor is Mg(2+).

It is found in the cytoplasm. It carries out the reaction apo-[ACP] + CoA = holo-[ACP] + adenosine 3',5'-bisphosphate + H(+). In terms of biological role, transfers the 4'-phosphopantetheine moiety from coenzyme A to a Ser of acyl-carrier-protein. This is Holo-[acyl-carrier-protein] synthase from Buchnera aphidicola subsp. Schizaphis graminum (strain Sg).